The sequence spans 210 residues: Mediator of RNA polymerase II transcription subunit 20 (210 aa).

This sequence belongs to the Mediator complex subunit 20 family. In terms of assembly, component of the Mediator complex, which is composed of at least 21 subunits that form three structurally distinct submodules. The Mediator head module contains MED6, MED8, MED11, SRB4/MED17, SRB5/MED18, ROX3/MED19, SRB2/MED20 and SRB6/MED22, the middle module contains MED1, MED4, NUT1/MED5, MED7, CSE2/MED9, NUT2/MED10, SRB7/MED21 and SOH1/MED31, and the tail module contains MED2, PGD1/MED3, RGR1/MED14, GAL11/MED15 and SIN4/MED16. The head and the middle modules interact directly with RNA polymerase II, whereas the elongated tail module interacts with gene-specific regulatory proteins. MED1 interacts directly with MED4 and MED7. SRB2/MED20 interacts directly with SRB4/MED17 and SRB5/MED18.

It localises to the nucleus. Functionally, component of the Mediator complex, a coactivator involved in the regulated transcription of nearly all RNA polymerase II-dependent genes. Mediator functions as a bridge to convey information from gene-specific regulatory proteins to the basal RNA polymerase II transcription machinery. The Mediator complex, having a compact conformation in its free form, is recruited to promoters by direct interactions with regulatory proteins and serves for the assembly of a functional preinitiation complex with RNA polymerase II and the general transcription factors. The Mediator complex unfolds to an extended conformation and partially surrounds RNA polymerase II, specifically interacting with the unphosphorylated form of the C-terminal domain (CTD) of RNA polymerase II. The Mediator complex dissociates from the RNA polymerase II holoenzyme and stays at the promoter when transcriptional elongation begins. The polypeptide is Mediator of RNA polymerase II transcription subunit 20 (SRB2) (Saccharomyces cerevisiae (strain ATCC 204508 / S288c) (Baker's yeast)).